We begin with the raw amino-acid sequence, 416 residues long: Geranyl diphosphate synthase (416 aa).

The Mg(2+) site is built by Asp-157 and Asp-161. The DDXXD motif signature appears at 157 to 161; that stretch reads DDIMD.

The protein belongs to the FPP/GGPP synthase family. Mg(2+) is required as a cofactor. In terms of tissue distribution, specifically expressed in the anterior midgut of male beetles, the site of aggregation pheromone biosynthesis.

It carries out the reaction isopentenyl diphosphate + dimethylallyl diphosphate = (2E)-geranyl diphosphate + diphosphate. It functions in the pathway pheromone biosynthesis. Functionally, geranyl diphosphate synthase involved in pheromone biosynthesis. This is Geranyl diphosphate synthase from Ips pini (Pine engraver beetle).